The primary structure comprises 213 residues: Ras-like protein rasU (213 aa).

Position 21-28 (21-28 (GDGGVGKT)) interacts with GTP. The Effector region signature appears at 43–51 (YDPTIEDLY). Residues 68–72 (DTAGQ) and 126–129 (NKSD) each bind GTP. Cysteine 210 is subject to Cysteine methyl ester. Cysteine 210 carries S-geranylgeranyl cysteine lipidation. Residues 211–213 (KMI) constitute a propeptide, removed in mature form.

Belongs to the small GTPase superfamily. Ras family.

The protein resides in the cell membrane. It carries out the reaction GTP + H2O = GDP + phosphate + H(+). Functionally, ras proteins bind GDP/GTP and possess intrinsic GTPase activity. The chain is Ras-like protein rasU (rasU) from Dictyostelium discoideum (Social amoeba).